We begin with the raw amino-acid sequence, 84 residues long: Large ribosomal subunit protein bL31B-2 (84 aa).

Belongs to the bacterial ribosomal protein bL31 family. Type B subfamily. Part of the 50S ribosomal subunit.

This Streptomyces coelicolor (strain ATCC BAA-471 / A3(2) / M145) protein is Large ribosomal subunit protein bL31B-2.